Consider the following 274-residue polypeptide: MQLMKSSYLELTARGHVTDLLKPDDTLEMLETYGFAVTQSPVEAVSTAHAYREIAAIREDFGLGEPYVPLLYRDRDEPTVTAVTRKGGSDHPVFHTGEAQGWHTDGLLEDIGTIKTTLLYCVSPAHRGGRTFLLNAGRVFEELRMEDPEAADVLLRDTILGRRSTIPGVDREAVGPVFLELGDGHYATRYGEGRVERWYPADAAEQHALDRALRFFRARRDDPDVRIDLLLRAGQCLIFRNDVLAHGRENFTDDPQRPRLLLRSLHTNAPKKPS.

His103, Asp105, and His246 together coordinate Fe cation.

It depends on Fe(2+) as a cofactor.

It catalyses the reaction UMP + 2-oxoglutarate + O2 = uridine-5'-aldehyde + succinate + phosphate + CO2. It functions in the pathway antibiotic biosynthesis. With respect to regulation, inhibited by several divalent cations, including Zn(2+). Functionally, dioxygenase involved in the biosynthesis of the lipopeptidyl nucleoside antibiotic A-90289. Catalyzes the dephosphorylation and oxidation of UMP to generate uridine-5'-aldehyde, the first intermediate in the biosynthesis of A-90289. The chain is Uridine-5'-phosphate dioxygenase from Streptomyces sp.